A 609-amino-acid polypeptide reads, in one-letter code: Glutamine--fructose-6-phosphate aminotransferase [isomerizing] (609 aa).

C2 acts as the Nucleophile; for GATase activity in catalysis. The 217-residue stretch at 2-218 folds into the Glutamine amidotransferase type-2 domain; it reads CGIVGAVAQR…EGDVAEVTRR (217 aa). SIS domains are found at residues 286-426 and 458-599; these read AAEF…HNGM and LAED…VDQP. Residue K604 is the For Fru-6P isomerization activity of the active site.

As to quaternary structure, homodimer.

It is found in the cytoplasm. The catalysed reaction is D-fructose 6-phosphate + L-glutamine = D-glucosamine 6-phosphate + L-glutamate. Its function is as follows. Catalyzes the first step in hexosamine metabolism, converting fructose-6P into glucosamine-6P using glutamine as a nitrogen source. This chain is Glutamine--fructose-6-phosphate aminotransferase [isomerizing], found in Shewanella oneidensis (strain ATCC 700550 / JCM 31522 / CIP 106686 / LMG 19005 / NCIMB 14063 / MR-1).